Reading from the N-terminus, the 304-residue chain is Protoheme IX farnesyltransferase (304 aa).

The next 9 helical transmembrane spans lie at 32–52 (VVAL…PGSV), 54–74 (LQPL…AAAF), 104–124 (ALTF…TLVN), 126–146 (LTAW…TAYL), 154–174 (IVVG…SVTG), 180–200 (ALLL…ALAI), 226–246 (CILL…LVGM), 247–267 (CGPV…YKAW), and 284–304 (FSIY…YLWV).

Belongs to the UbiA prenyltransferase family. Protoheme IX farnesyltransferase subfamily.

Its subcellular location is the cell inner membrane. The catalysed reaction is heme b + (2E,6E)-farnesyl diphosphate + H2O = Fe(II)-heme o + diphosphate. It functions in the pathway porphyrin-containing compound metabolism; heme O biosynthesis; heme O from protoheme: step 1/1. Its function is as follows. Converts heme B (protoheme IX) to heme O by substitution of the vinyl group on carbon 2 of heme B porphyrin ring with a hydroxyethyl farnesyl side group. The sequence is that of Protoheme IX farnesyltransferase from Shewanella sediminis (strain HAW-EB3).